A 362-amino-acid chain; its full sequence is Phosphoserine aminotransferase (362 aa).

L-glutamate-binding residues include serine 9 and arginine 42. Pyridoxal 5'-phosphate is bound by residues 76-77, tryptophan 102, threonine 153, aspartate 174, and glutamine 197; that span reads GR. The residue at position 198 (lysine 198) is an N6-(pyridoxal phosphate)lysine. Position 239–240 (239–240) interacts with pyridoxal 5'-phosphate; sequence NT.

Belongs to the class-V pyridoxal-phosphate-dependent aminotransferase family. SerC subfamily. As to quaternary structure, homodimer. The cofactor is pyridoxal 5'-phosphate.

The protein localises to the cytoplasm. The catalysed reaction is O-phospho-L-serine + 2-oxoglutarate = 3-phosphooxypyruvate + L-glutamate. The enzyme catalyses 4-(phosphooxy)-L-threonine + 2-oxoglutarate = (R)-3-hydroxy-2-oxo-4-phosphooxybutanoate + L-glutamate. It functions in the pathway amino-acid biosynthesis; L-serine biosynthesis; L-serine from 3-phospho-D-glycerate: step 2/3. The protein operates within cofactor biosynthesis; pyridoxine 5'-phosphate biosynthesis; pyridoxine 5'-phosphate from D-erythrose 4-phosphate: step 3/5. Functionally, catalyzes the reversible conversion of 3-phosphohydroxypyruvate to phosphoserine and of 3-hydroxy-2-oxo-4-phosphonooxybutanoate to phosphohydroxythreonine. The chain is Phosphoserine aminotransferase from Escherichia coli (strain ATCC 8739 / DSM 1576 / NBRC 3972 / NCIMB 8545 / WDCM 00012 / Crooks).